The sequence spans 37 residues: Large ribosomal subunit protein bL36 (37 aa).

This sequence belongs to the bacterial ribosomal protein bL36 family.

This Thermobifida fusca (strain YX) protein is Large ribosomal subunit protein bL36.